Reading from the N-terminus, the 252-residue chain is Glucosamine-6-phosphate deaminase (252 aa).

The Proton acceptor; for enolization step role is filled by Asp67. Asn137 serves as the catalytic For ring-opening step. The active-site Proton acceptor; for ring-opening step is His139. Glu144 (for ring-opening step) is an active-site residue.

Belongs to the glucosamine/galactosamine-6-phosphate isomerase family. NagB subfamily.

It carries out the reaction alpha-D-glucosamine 6-phosphate + H2O = beta-D-fructose 6-phosphate + NH4(+). The protein operates within amino-sugar metabolism; N-acetylneuraminate degradation; D-fructose 6-phosphate from N-acetylneuraminate: step 5/5. Functionally, catalyzes the reversible isomerization-deamination of glucosamine 6-phosphate (GlcN6P) to form fructose 6-phosphate (Fru6P) and ammonium ion. This chain is Glucosamine-6-phosphate deaminase, found in Staphylococcus aureus (strain bovine RF122 / ET3-1).